Reading from the N-terminus, the 350-residue chain is Twinfilin-1 (350 aa).

Residue S2 is modified to N-acetylserine. The region spanning S2–L139 is the ADF-H 1 domain. Phosphoserine is present on residues S143 and S277. Positions L175 to H313 constitute an ADF-H 2 domain. Y309 is subject to Phosphotyrosine. A disordered region spans residues Q316–D350. The residue at position 349 (T349) is a Phosphothreonine.

This sequence belongs to the actin-binding proteins ADF family. Twinfilin subfamily. In terms of assembly, interacts with G-actin; ADP-actin form and capping protein (CP). May also be able to interact with TWF2 and phosphoinositides, PI(4,5)P2. When bound to PI(4,5)P2, it is down-regulated. Interacts with ACTG1. Post-translationally, phosphorylated on serine and threonine residues.

The protein localises to the cytoplasm. It localises to the cytoskeleton. Its function is as follows. Actin-binding protein involved in motile and morphological processes. Inhibits actin polymerization, likely by sequestering G-actin. By capping the barbed ends of filaments, it also regulates motility. Seems to play an important role in clathrin-mediated endocytosis and distribution of endocytic organelles. This Rattus norvegicus (Rat) protein is Twinfilin-1 (Twf1).